The primary structure comprises 178 residues: Bifunctional protein PyrR (178 aa).

The PRPP-binding motif lies at 99 to 111 (VVLVDDVIYTGRT).

Belongs to the purine/pyrimidine phosphoribosyltransferase family. PyrR subfamily. Homodimer and homohexamer; in equilibrium.

The catalysed reaction is UMP + diphosphate = 5-phospho-alpha-D-ribose 1-diphosphate + uracil. Regulates transcriptional attenuation of the pyrimidine nucleotide (pyr) operon by binding in a uridine-dependent manner to specific sites on pyr mRNA. This disrupts an antiterminator hairpin in the RNA and favors formation of a downstream transcription terminator, leading to a reduced expression of downstream genes. Its function is as follows. Also displays a weak uracil phosphoribosyltransferase activity which is not physiologically significant. This chain is Bifunctional protein PyrR, found in Thermoanaerobacter pseudethanolicus (strain ATCC 33223 / 39E) (Clostridium thermohydrosulfuricum).